Here is a 514-residue protein sequence, read N- to C-terminus: Probable drug/proton antiporter YHK8 (514 aa).

The Cytoplasmic segment spans residues 1-74 (MVAEFQIASA…RHMSTARRYY (74 aa)). Residues 75 to 95 (ISSLITFTSMVITMISSSWTL) form a helical membrane-spanning segment. The Extracellular portion of the chain corresponds to 96 to 111 (PSTHIIEHFHISHEVS). A helical transmembrane segment spans residues 112–132 (TLGITLYVFGLGIGPLFLSPL). Over 133-141 (SELYGRRIT) the chain is Cytoplasmic. A helical transmembrane segment spans residues 142-162 (FLYALTLSIIWQCLTIWSKTI). Topologically, residues 163-170 (TGVMFGRF) are extracellular. A helical transmembrane segment spans residues 171 to 191 (LSGFFGSAFLSVAGGAIADIF). At 192–200 (DKDQIGIPM) the chain is on the cytoplasmic side. The chain crosses the membrane as a helical span at residues 201–221 (AIYTTSAFLGPSLGPIIGGAL). Topologically, residues 222–227 (YHQSYK) are extracellular. Residues 228–248 (WTFITLLITSGCCLVMIIFTI) traverse the membrane as a helical segment. Topologically, residues 249–307 (PETYKPMLLIRKAKRLRKEKNDQRYYAVLEVTREQTSLLSAIFLSTKRPFGLLLRDRMM) are cytoplasmic. A helical membrane pass occupies residues 308–328 (GVLCFYTGLELAIIYLYFVAF). Over 329–342 (PYVFKKLYNFGPME) the chain is Extracellular. The helical transmembrane segment at 343-363 (IACSYIGIMVGMILSAPTCLL) threads the bilayer. Residues 364–386 (FQKTFEWRVKRNNGVKTPEMRFE) lie on the Cytoplasmic side of the membrane. Residues 387–407 (PLFYGAFLTPVGLFIFAFTCY) traverse the membrane as a helical segment. Residues 408 to 412 (KHVHW) are Extracellular-facing. A helical transmembrane segment spans residues 413-433 (IAPIIGSAIFGSGVYFVFTGV). Topologically, residues 434–447 (FAYTVDAYRRYAAS) are cytoplasmic. The helical transmembrane segment at 448-468 (GMACNTFVRCIMAGVFPLFGL) threads the bilayer. The Extracellular segment spans residues 469 to 477 (QMYKSMGVN). Residues 478-498 (WAGFLLAMVTVAMIPVPFLFT) form a helical membrane-spanning segment. Topologically, residues 499-514 (KYGARLRAKSPYAWDD) are cytoplasmic.

Belongs to the major facilitator superfamily. CAR1 family.

The protein localises to the membrane. Probable drug/proton antiporter. The chain is Probable drug/proton antiporter YHK8 (YHK8) from Saccharomyces cerevisiae (strain ATCC 204508 / S288c) (Baker's yeast).